A 151-amino-acid polypeptide reads, in one-letter code: UPF0208 membrane protein ECA3038 (151 aa).

Helical transmembrane passes span 46–66 (FGIRIMPPLAVFTLTWQIALG) and 69–89 (LGPAIATALFACSLPLQGLWW).

It belongs to the UPF0208 family.

Its subcellular location is the cell inner membrane. This is UPF0208 membrane protein ECA3038 from Pectobacterium atrosepticum (strain SCRI 1043 / ATCC BAA-672) (Erwinia carotovora subsp. atroseptica).